Here is a 190-residue protein sequence, read N- to C-terminus: UPF0301 protein PSPTO_5037 (190 aa).

This sequence belongs to the UPF0301 (AlgH) family.

This is UPF0301 protein PSPTO_5037 from Pseudomonas syringae pv. tomato (strain ATCC BAA-871 / DC3000).